We begin with the raw amino-acid sequence, 162 residues long: Ribosomal RNA large subunit methyltransferase H (162 aa).

S-adenosyl-L-methionine-binding residues include Leu78 and Gly110.

This sequence belongs to the RNA methyltransferase RlmH family. As to quaternary structure, homodimer.

It is found in the cytoplasm. The catalysed reaction is pseudouridine(1915) in 23S rRNA + S-adenosyl-L-methionine = N(3)-methylpseudouridine(1915) in 23S rRNA + S-adenosyl-L-homocysteine + H(+). In terms of biological role, specifically methylates the pseudouridine at position 1915 (m3Psi1915) in 23S rRNA. This Bradyrhizobium sp. (strain ORS 278) protein is Ribosomal RNA large subunit methyltransferase H.